A 1027-amino-acid chain; its full sequence is Protein translocase subunit SecA (1027 aa).

ATP contacts are provided by residues Gln143, 161 to 165 (GEGKT), and Asp661. The segment at 981–1027 (EESGTSNADNAGDNGPQTVIAEKKPGRNDLCPCGSGKKYKNCHGQQP) is disordered. The Zn(2+) site is built by Cys1011, Cys1013, Cys1022, and His1023.

The protein belongs to the SecA family. In terms of assembly, monomer and homodimer. Part of the essential Sec protein translocation apparatus which comprises SecA, SecYEG and auxiliary proteins SecDF. Other proteins may also be involved. It depends on Zn(2+) as a cofactor.

The protein localises to the cell inner membrane. It is found in the cytoplasm. It catalyses the reaction ATP + H2O + cellular proteinSide 1 = ADP + phosphate + cellular proteinSide 2.. Part of the Sec protein translocase complex. Interacts with the SecYEG preprotein conducting channel. Has a central role in coupling the hydrolysis of ATP to the transfer of proteins into and across the cell membrane, serving as an ATP-driven molecular motor driving the stepwise translocation of polypeptide chains across the membrane. This Chlorobium limicola (strain DSM 245 / NBRC 103803 / 6330) protein is Protein translocase subunit SecA.